The chain runs to 114 residues: Fluoride-specific ion channel FluC 2 (114 aa).

Transmembrane regions (helical) follow at residues 30-50 (FPVA…LLSG), 57-77 (TFAL…TFAV), and 88-108 (ALPS…AAWL). Gly-67 and Thr-70 together coordinate Na(+).

It belongs to the fluoride channel Fluc/FEX (TC 1.A.43) family.

The protein resides in the cell membrane. The catalysed reaction is fluoride(in) = fluoride(out). With respect to regulation, na(+) is not transported, but it plays an essential structural role and its presence is essential for fluoride channel function. Functionally, fluoride-specific ion channel. Important for reducing fluoride concentration in the cell, thus reducing its toxicity. The polypeptide is Fluoride-specific ion channel FluC 2 (Rhodococcus jostii (strain RHA1)).